The following is a 121-amino-acid chain: Small ribosomal subunit protein uS13 (121 aa).

The segment at 94–121 (DLPVRGQRTKTNARTRKGPRKSGVQLKK) is disordered. The segment covering 100–121 (QRTKTNARTRKGPRKSGVQLKK) has biased composition (basic residues).

The protein belongs to the universal ribosomal protein uS13 family. As to quaternary structure, part of the 30S ribosomal subunit. Forms a loose heterodimer with protein S19. Forms two bridges to the 50S subunit in the 70S ribosome.

Its function is as follows. Located at the top of the head of the 30S subunit, it contacts several helices of the 16S rRNA. In the 70S ribosome it contacts the 23S rRNA (bridge B1a) and protein L5 of the 50S subunit (bridge B1b), connecting the 2 subunits; these bridges are implicated in subunit movement. Contacts the tRNAs in the A and P-sites. This is Small ribosomal subunit protein uS13 from Polynucleobacter necessarius subsp. necessarius (strain STIR1).